We begin with the raw amino-acid sequence, 587 residues long: Inorganic phosphate transporter PHO84 (587 aa).

At 1-67 the chain is on the extracellular side; it reads MSSVNKDTIH…FGWQQVKTIS (67 aa). Residue Lys-6 forms a Glycyl lysine isopeptide (Lys-Gly) (interchain with G-Cter in ubiquitin) linkage. A helical transmembrane segment spans residues 68–88; that stretch reads IAGVGFLTDSYDIFAINLGIT. The Cytoplasmic segment spans residues 89-108; the sequence is MMSYVYWHGSMPGPSQTLLK. Residues 109 to 129 form a helical membrane-spanning segment; that stretch reads VSTSVGTVIGQFGFGTLADIV. Residues 130-133 lie on the Extracellular side of the membrane; the sequence is GRKR. Residues 134 to 154 traverse the membrane as a helical segment; sequence IYGMELIIMIVCTILQTTVAH. Residues 155-156 are Cytoplasmic-facing; the sequence is SP. The chain crosses the membrane as a helical span at residues 157 to 177; sequence AINFVAVLTFYRIVMGIGIGG. At 178–201 the chain is on the extracellular side; sequence DYPLSSIITSEFATTKWRGAIMGA. Residues 202–222 form a helical membrane-spanning segment; sequence VFANQAWGQISGGIIALILVA. At 223–250 the chain is on the cytoplasmic side; that stretch reads AYKGELEYANSGAECDARCQKACDQMWR. A helical membrane pass occupies residues 251-271; the sequence is ILIGLGTVLGLACLYFRLTIP. Topologically, residues 272 to 345 are extracellular; the sequence is ESPRYQLDVN…RHFGQWKYGK (74 aa). Lys-298 is covalently cross-linked (Glycyl lysine isopeptide (Lys-Gly) (interchain with G-Cter in ubiquitin)). Position 302 is a phosphothreonine (Thr-302). Phosphoserine occurs at positions 303 and 316. Phosphothreonine is present on Thr-317. Ser-321 carries the post-translational modification Phosphoserine. Residues 346–366 form a helical membrane-spanning segment; it reads ILLGTAGSWFTLDVAFYGLSL. Residues 367-395 lie on the Cytoplasmic side of the membrane; that stretch reads NSAVILQTIGYAGSKNVYKKLYDTAVGNL. Residues 396-416 traverse the membrane as a helical segment; sequence ILICAGSLPGYWVSVFTVDII. Residues 417-419 lie on the Extracellular side of the membrane; that stretch reads GRK. Residues 420-440 traverse the membrane as a helical segment; sequence PIQLAGFIILTALFCVIGFAY. Over 441–442 the chain is Cytoplasmic; sequence HK. Residues 443-463 form a helical membrane-spanning segment; the sequence is LGDHGLLALYVICQFFQNFGP. At 464-485 the chain is on the extracellular side; the sequence is NTTTFIVPGECFPTRYRSTAHG. A helical transmembrane segment spans residues 486–506; sequence ISAASGKVGAIIAQTALGTLI. The Cytoplasmic portion of the chain corresponds to 507 to 522; it reads DHNCARDGKPTNCWLP. Residues 523-543 traverse the membrane as a helical segment; sequence HVMEIFALFMLLGIFTTLLIP. The Extracellular portion of the chain corresponds to 544 to 587; sequence ETKRKTLEEINELYHDEIDPATLNFRNKNNDIESSSPSQLQHEA. A disordered region spans residues 568–587; it reads FRNKNNDIESSSPSQLQHEA. A phosphoserine mark is found at Ser-577, Ser-579, and Ser-581.

It belongs to the major facilitator superfamily. Phosphate:H(+) symporter (TC 2.A.1.9) family. May function as a monomer. Phosphorylated; phosphorylation increases after phosphate addition to the growth medium. In terms of processing, ubiquitinated in a phosphate-dependent manner; ubiquitination may influence the trafficking of PHO84 to the cell membrane and serve as a signal for endocytosis and internalization.

It localises to the cell membrane. Its subcellular location is the vacuole. The catalysed reaction is phosphate(in) + H(+)(in) = phosphate(out) + H(+)(out). It carries out the reaction Mn(2+)(in) = Mn(2+)(out). The enzyme catalyses Zn(2+)(in) = Zn(2+)(out). It catalyses the reaction Cu(2+)(in) = Cu(2+)(out). The catalysed reaction is Co(2+)(in) = Co(2+)(out). With respect to regulation, transport activity is inhibited in the presence of the protonophore carbonylcyanide m-chlorophenylhydrazone. Transport activity is inhibited by glycerol-3-phosphate. Transport activity is inhibited by phosphonoacetic acid. Signaling activity is stimulated by glycerol-3-phosphate which acts as a nontransported PHO84 agonist that can trigger PKA signaling. Signaling activity is stimulated by arsenate. Its function is as follows. Proton-coupled high-affinity transporter for external inorganic phosphate. Acts as a transceptor, a membrane protein that in addition to its transporter activity also possesses receptor-like signaling activity; mediates activation of the protein kinase A (PKA) pathway targets during growth induction, triggered by phosphate addition to cells growth-arrested due to previous phosphate starvation. Is not an essential protein, since constitutive, low affinity phosphate transporters exist in yeast. Can function as a low affinity metal transporter that transports manganese, zinc, cobalt and copper. Plays a role in manganese homeostasis predominantly under manganese surplus conditions. This Saccharomyces cerevisiae (strain ATCC 204508 / S288c) (Baker's yeast) protein is Inorganic phosphate transporter PHO84 (PHO84).